The primary structure comprises 1239 residues: Inner tegument protein (1239 aa).

Disordered regions lie at residues 1–20, 669–704, 959–980, and 1087–1239; these read MASA…DAQP, GESP…GGGP, RPPP…DTPP, and GRNA…AEDE. Residues 615–1239 form an interaction with large tegument protein region; the sequence is NELPKTRSLA…RPPRPTAEDE (625 aa). Low complexity predominate over residues 1112-1123; it reads DSSPFSFSSSDF. The segment covering 1139–1148 has biased composition (gly residues); it reads VPGGGGGGEG. A compositionally biased stretch (basic and acidic residues) spans 1151–1170; it reads EEERERPSDIDTAARARKVE. Low complexity predominate over residues 1180–1189; sequence RTTPSPSRRA. The span at 1219–1232 shows a compositional bias: basic residues; it reads VRPRTRRGATRRPP.

Belongs to the herpesviridae inner tegument protein family. As to quaternary structure, interacts (via C-terminus) with the large tegument protein/LTP (via N-terminus).

It localises to the virion tegument. The protein resides in the host cytoplasm. The protein localises to the host nucleus. Its subcellular location is the host Golgi apparatus. It is found in the host trans-Golgi network. In terms of biological role, plays an essential role in cytoplasmic secondary envelopment during viral egress. Interacts with the capsid via the large tegument protein/LTP and participates in its transport to the host trans-Golgi network (TGN) where secondary envelopment occurs. Modulates tegumentation and capsid accumulation at the viral assembly complex. The protein is Inner tegument protein of Homo sapiens (Human).